The sequence spans 311 residues: DNA-directed RNA polymerase subunit alpha (311 aa).

The interval 1-226 is alpha N-terminal domain (alpha-NTD); sequence MIEFEKPNIT…EHLDLFTNLT (226 aa). The interval 243 to 311 is alpha C-terminal domain (alpha-CTD); it reads DDRILDRTIE…IDLGLGLKDK (69 aa).

This sequence belongs to the RNA polymerase alpha chain family. In terms of assembly, homodimer. The RNAP catalytic core consists of 2 alpha, 1 beta, 1 beta' and 1 omega subunit. When a sigma factor is associated with the core the holoenzyme is formed, which can initiate transcription.

It carries out the reaction RNA(n) + a ribonucleoside 5'-triphosphate = RNA(n+1) + diphosphate. Functionally, DNA-dependent RNA polymerase catalyzes the transcription of DNA into RNA using the four ribonucleoside triphosphates as substrates. The sequence is that of DNA-directed RNA polymerase subunit alpha from Streptococcus pneumoniae serotype 4 (strain ATCC BAA-334 / TIGR4).